A 515-amino-acid polypeptide reads, in one-letter code: MSNVAVINQQHRLIKITSSADIVLIGAGIMSATFGMFLTILEPTWRIHIYERLSQPAQESSNVWNNAGTGHAAFCELNYTQYNNKNCSVDISKAIAVNEAFEISRQFWAYLVEIKVLKYPSSFINNVPHMSFVWGEENVCFLKKRFQALLNSVLFSGMVYSEDLQQIRQWTPLIIDGRNVSQKIAATRMEMGTDVNFGALTQQLLNELKKNVNFKMYLQHDVVSVQNNNDATWDVHVIDRRCKHKKCIRTNYVFIGAGGRSLNLLQTSGIPEVYGYAGFPVGGQFLVTKNPKIVEQHLAKVYGKASVNAPPMSVPHIDTRILNGEKILLFGPFATFSSKFLKYGSWLDLFHSLNKHNVIPILQAGIDNFDLIKYLISQLVMSNMNRIDELREYYPTVNPSDWTLVTAGQRVQIIKRNSNRRGILQFGTEVVNSGDGTLSALLGASPGASTVVSIILQLLNTMFNNKINSDVWKNKLIDMIPSYTKNLNGDLILVNKIRQYTCNALKLNYIEAIDR.

Belongs to the MQO family. FAD serves as cofactor.

The catalysed reaction is (S)-malate + a quinone = a quinol + oxaloacetate. Its pathway is carbohydrate metabolism; tricarboxylic acid cycle; oxaloacetate from (S)-malate (quinone route): step 1/1. This chain is Probable malate:quinone oxidoreductase, found in Blochmanniella pennsylvanica (strain BPEN).